Here is a 232-residue protein sequence, read N- to C-terminus: Phosphatidylserine decarboxylase proenzyme (232 aa).

Ser190 acts as the Schiff-base intermediate with substrate; via pyruvic acid in catalysis. Ser190 carries the pyruvic acid (Ser); by autocatalysis modification.

It belongs to the phosphatidylserine decarboxylase family. PSD-A subfamily. Heterodimer of a large membrane-associated beta subunit and a small pyruvoyl-containing alpha subunit. It depends on pyruvate as a cofactor. In terms of processing, is synthesized initially as an inactive proenzyme. Formation of the active enzyme involves a self-maturation process in which the active site pyruvoyl group is generated from an internal serine residue via an autocatalytic post-translational modification. Two non-identical subunits are generated from the proenzyme in this reaction, and the pyruvate is formed at the N-terminus of the alpha chain, which is derived from the carboxyl end of the proenzyme. The post-translation cleavage follows an unusual pathway, termed non-hydrolytic serinolysis, in which the side chain hydroxyl group of the serine supplies its oxygen atom to form the C-terminus of the beta chain, while the remainder of the serine residue undergoes an oxidative deamination to produce ammonia and the pyruvoyl prosthetic group on the alpha chain.

The protein resides in the cell membrane. The catalysed reaction is a 1,2-diacyl-sn-glycero-3-phospho-L-serine + H(+) = a 1,2-diacyl-sn-glycero-3-phosphoethanolamine + CO2. The protein operates within phospholipid metabolism; phosphatidylethanolamine biosynthesis; phosphatidylethanolamine from CDP-diacylglycerol: step 2/2. Catalyzes the formation of phosphatidylethanolamine (PtdEtn) from phosphatidylserine (PtdSer). This chain is Phosphatidylserine decarboxylase proenzyme, found in Bradyrhizobium sp. (strain BTAi1 / ATCC BAA-1182).